A 237-amino-acid polypeptide reads, in one-letter code: 1-(5-phosphoribosyl)-5-[(5-phosphoribosylamino)methylideneamino] imidazole-4-carboxamide isomerase (237 aa).

Asp-8 functions as the Proton acceptor in the catalytic mechanism. Asp-128 (proton donor) is an active-site residue.

The protein belongs to the HisA/HisF family.

Its subcellular location is the cytoplasm. The enzyme catalyses 1-(5-phospho-beta-D-ribosyl)-5-[(5-phospho-beta-D-ribosylamino)methylideneamino]imidazole-4-carboxamide = 5-[(5-phospho-1-deoxy-D-ribulos-1-ylimino)methylamino]-1-(5-phospho-beta-D-ribosyl)imidazole-4-carboxamide. It participates in amino-acid biosynthesis; L-histidine biosynthesis; L-histidine from 5-phospho-alpha-D-ribose 1-diphosphate: step 4/9. The chain is 1-(5-phosphoribosyl)-5-[(5-phosphoribosylamino)methylideneamino] imidazole-4-carboxamide isomerase from Gemmatimonas aurantiaca (strain DSM 14586 / JCM 11422 / NBRC 100505 / T-27).